A 258-amino-acid polypeptide reads, in one-letter code: Global transcriptional regulator CodY (258 aa).

Residues 1–156 (MSSLLSKTRR…SATIVGMEML (156 aa)) are GAF domain. The H-T-H motif DNA-binding region spans 204–223 (ASKIADKVGITRSVIVNALR).

This sequence belongs to the CodY family.

The protein localises to the cytoplasm. In terms of biological role, DNA-binding global transcriptional regulator which is involved in the adaptive response to starvation and acts by directly or indirectly controlling the expression of numerous genes in response to nutrient availability. During rapid exponential growth, CodY is highly active and represses genes whose products allow adaptation to nutrient depletion. This Clostridium botulinum (strain Eklund 17B / Type B) protein is Global transcriptional regulator CodY.